Here is a 503-residue protein sequence, read N- to C-terminus: Nondiscriminating glutamyl-tRNA synthetase EARS2, mitochondrial (503 aa).

Residues 1–22 (MKILRGVSRQMCTSRPEVRVRF) constitute a mitochondrion transit peptide. 21-23 (RFA) lines the L-glutamate pocket. The short motif at 26–34 (PTGFLHLGG) is the 'HIGH' region element. Residue histidine 31 participates in ATP binding. L-glutamate contacts are provided by residues glutamate 57, 209–213 (YHLAS), and arginine 227. ATP contacts are provided by residues glutamate 230 and 265–269 (KLSKR). The short motif at 265 to 269 (KLSKR) is the 'KMSKS' region element.

Belongs to the class-I aminoacyl-tRNA synthetase family. Glutamate--tRNA ligase type 1 subfamily.

Its subcellular location is the mitochondrion matrix. The catalysed reaction is tRNA(Glx) + L-glutamate + ATP = L-glutamyl-tRNA(Glx) + AMP + diphosphate. The enzyme catalyses tRNA(Glu) + L-glutamate + ATP = L-glutamyl-tRNA(Glu) + AMP + diphosphate. It catalyses the reaction tRNA(Gln) + L-glutamate + ATP = L-glutamyl-tRNA(Gln) + AMP + diphosphate. Non-discriminating glutamyl-tRNA synthetase that catalyzes aminoacylation of both mitochondrial tRNA(Glu) and tRNA(Gln) and participates in RNA aminoacylation for mitochondrial protein translation. Attachs glutamate to tRNA(Glu) or tRNA(Gln) in a two-step reaction: glutamate is first activated by ATP to form Glu-AMP and then transferred to the acceptor end of tRNA(Glu) or tRNA(Gln). The protein is Nondiscriminating glutamyl-tRNA synthetase EARS2, mitochondrial of Danio rerio (Zebrafish).